Here is a 91-residue protein sequence, read N- to C-terminus: Putative septation protein SpoVG (91 aa).

Belongs to the SpoVG family.

Its function is as follows. Could be involved in septation. The sequence is that of Putative septation protein SpoVG from Clostridium botulinum (strain Alaska E43 / Type E3).